Here is a 710-residue protein sequence, read N- to C-terminus: Solute carrier organic anion transporter family member 3A1 (710 aa).

M1 carries the N-acetylmethionine modification. Residues 1–15 (MQGKKPGGSSGGGRS) show a composition bias toward gly residues. Residues 1–25 (MQGKKPGGSSGGGRSGELQGDEAQR) are disordered. Residues 1 to 40 (MQGKKPGGSSGGGRSGELQGDEAQRNKKKKKKVSCFSNIK) are Cytoplasmic-facing. Residues 41–60 (IFLVSECALMLAQGTVGAYL) traverse the membrane as a helical segment. Topologically, residues 61–79 (VSVLTTLERRFNLQSADVG) are extracellular. The chain crosses the membrane as a helical span at residues 80 to 100 (VIASSFEIGNLALILFVSYFG). Topologically, residues 101–106 (ARGHRP) are cytoplasmic. A helical membrane pass occupies residues 107–131 (RLIGCGGIVMALGALLSALPEFLTH). The Extracellular segment spans residues 132 to 174 (QYKYEAGEIRWGAEGRDVCATNGSSSDEGPDPDLICRNRTATN). Residues N153 and N169 are each glycosylated (N-linked (GlcNAc...) asparagine). Residues 175 to 203 (MMYLLLIGAQVLLGIGATPVQPLGVSYID) form a helical membrane-spanning segment. The Cytoplasmic segment spans residues 204 to 222 (DHVRRKDSSLYIGILFTML). A helical membrane pass occupies residues 223–243 (VFGPACGFILGSFCTKIYVDA). At 244 to 261 (VFIDTSNLDITPDDPRWI) the chain is on the extracellular side. Residues 262–286 (GAWWGGFLLCGALLFFSSLLMFGFP) form a helical membrane-spanning segment. Residues 287–344 (QSLPPHSEPGMESEQAMLPEREYERPKPSNGVLRHPLEPDSSASCFQQLRVIPKVTKH) lie on the Cytoplasmic side of the membrane. The chain crosses the membrane as a helical span at residues 345–366 (LLSNPVFTCIVLAACMEIAVVA). Residues 367-386 (GFAAFLGKYLEQQFNLTTSS) lie on the Extracellular side of the membrane. A glycan (N-linked (GlcNAc...) asparagine) is linked at N381. The helical transmembrane segment at 387-410 (ANQLLGMTAIPCACLGIFLGGLLV) threads the bilayer. Residues 411-414 (KKLS) lie on the Cytoplasmic side of the membrane. A helical transmembrane segment spans residues 415-438 (LSALGAIRMAMLVNLVSTACYVSF). Residues 439 to 539 (LFLGCDTVPV…PGCQEAFLTF (101 aa)) lie on the Extracellular side of the membrane. N-linked (GlcNAc...) asparagine glycosylation occurs at N457. One can recognise a Kazal-like domain in the interval 465–513 (LDPYSPCNNNCECQTDSFTPVCGADGITYLSACFAGCNSTNLTGCACLT). 3 cysteine pairs are disulfide-bonded: C471-C501, C477-C497, and C486-C511. N-linked (GlcNAc...) asparagine glycans are attached at residues N502, N505, and N519. The chain crosses the membrane as a helical span at residues 540 to 562 (LCVMCVCSLIGAMAQTPSVIILI). The Cytoplasmic portion of the chain corresponds to 563–571 (RTVSPELKS). The chain crosses the membrane as a helical span at residues 572-597 (YALGVLFLLLRLLGFIPPPLIFGAGI). Residues 598–630 (DSTCLFWSTFCGEQGACVLYDNVVYRYLYVSIA) lie on the Extracellular side of the membrane. Residues 631–648 (IALKSFAFILYTTTWQCL) traverse the membrane as a helical segment. Over 649–705 (RKNYKRYIKNHEGGLSTSEFLASTLTLDNLGRDPVPAHQTHRTKFIYNLEDHEWCEN) the chain is Cytoplasmic.

The protein belongs to the organo anion transporter (TC 2.A.60) family. Expressed in many brain regions, including frontal cortex, brain stem and cerebellum. Associated with neuronal bodies in a punctated matter. Detected at the arcuate nucleus and the choroid plexus (at protein level). Little expression, if any, in oligodendrocytes. In the cardiovascular system, detected in cardiac muscle cells and endothelial cells of aorta, coronary artery and left ventricular endocardium (at protein level). In the respiratory system, detected in alveolar epithelial cells and in mucosal epithelium of the trachea (at protein level). In the reproductive system, detected in spermatozoa, oocytes, smooth muscle cells of the ovary, epithelium of the glandula uterine, smooth muscle cells of the myometrium and epithelium of the endometrium (at protein level). In the kidney, detected in afferent and efferent arterioles, and the epithelium of distal tubules and collecting tubules (at protein level).

The protein localises to the basolateral cell membrane. It localises to the apical cell membrane. The protein resides in the basal cell membrane. The enzyme catalyses L-thyroxine(out) = L-thyroxine(in). It carries out the reaction prostaglandin E1(out) = prostaglandin E1(in). It catalyses the reaction prostaglandin E2(out) = prostaglandin E2(in). The catalysed reaction is prostaglandin F2alpha(out) = prostaglandin F2alpha(in). The enzyme catalyses (5Z,8Z,11Z,14Z)-eicosatetraenoate(out) = (5Z,8Z,11Z,14Z)-eicosatetraenoate(in). It carries out the reaction taurocholate(out) = taurocholate(in). It catalyses the reaction glycocholate(out) = glycocholate(in). The catalysed reaction is estrone 3-sulfate(out) = estrone 3-sulfate(in). The enzyme catalyses argipressin(out) = argipressin(in). Its function is as follows. Putative organic anion antiporter with apparent broad substrate specificity. Recognizes various substrates including thyroid hormone L-thyroxine, prostanoids such as prostaglandin E1 and E2, bile acids such as taurocholate, glycolate and glycochenodeoxycholate and peptide hormones such as L-arginine vasopressin, likely operating in a tissue-specific manner. The transport mechanism, its electrogenicity and potential tissue-specific counterions remain to be elucidated. The polypeptide is Solute carrier organic anion transporter family member 3A1 (Slco3a1) (Rattus norvegicus (Rat)).